Reading from the N-terminus, the 170-residue chain is Transcription factor E (170 aa).

Residues 1-93 (MKEAYLYIVE…TWYVDDDVIR (93 aa)) enclose the HTH TFE/IIEalpha-type domain.

This sequence belongs to the TFE family. Monomer. Interaction with RNA polymerase subunits RpoF and RpoE is necessary for Tfe stimulatory transcription activity. Able to interact with Tbp and RNA polymerase in the absence of DNA promoter. Interacts both with the preinitiation and elongation complexes.

Its function is as follows. Transcription factor that plays a role in the activation of archaeal genes transcribed by RNA polymerase. Facilitates transcription initiation by enhancing TATA-box recognition by TATA-box-binding protein (Tbp), and transcription factor B (Tfb) and RNA polymerase recruitment. Not absolutely required for transcription in vitro, but particularly important in cases where Tbp or Tfb function is not optimal. It dynamically alters the nucleic acid-binding properties of RNA polymerases by stabilizing the initiation complex and destabilizing elongation complexes. Seems to translocate with the RNA polymerase following initiation and acts by binding to the non template strand of the transcription bubble in elongation complexes. The sequence is that of Transcription factor E from Pyrobaculum neutrophilum (strain DSM 2338 / JCM 9278 / NBRC 100436 / V24Sta) (Thermoproteus neutrophilus).